The primary structure comprises 751 residues: Nibrin (751 aa).

The 60-residue stretch at 24–83 (YVVGRKNCGILIENDQSISRNHAVLTVNFPVTSLSQTDEIPTLTIKDNSKYGTFVNEEKM) folds into the FHA domain. BRCT domains lie at 105 to 181 (KFRV…SEFL) and 224 to 315 (GKTF…LAVI). The interval 111 to 328 (EPLVVCSSCL…TENYCNPQGQ (218 aa)) is mediates interaction with SP100. The interval 221 to 403 (IFKGKTFVFL…SRKLSQETFN (183 aa)) is interaction with MTOR, MAPKAP1 and RICTOR. Thr-337 carries the post-translational modification Phosphothreonine. Ser-343 is subject to Phosphoserine; by ATM. A phosphoserine mark is found at Ser-347 and Ser-398. The tract at residues 389 to 418 (GLEQSSRKLSQETFNIKEAPKPSSKANNVA) is disordered. The residue at position 433 (Ser-433) is a Phosphoserine; by CDK2. A Glycyl lysine isopeptide (Lys-Gly) (interchain with G-Cter in ubiquitin) cross-link involves residue Lys-436. 2 disordered regions span residues 444 to 479 (KDWT…SSCK) and 491 to 550 (EQTQ…RKRK). The span at 446–457 (WTSQQQQNSIKN) shows a compositional bias: polar residues. Positions 461–467 (PCTRKRE) match the Nuclear localization signal motif. 2 stretches are compositionally biased toward basic and acidic residues: residues 502 to 518 (KSKE…READ) and 528 to 539 (ELNRKSPDRKPL). A Phosphoserine modification is found at Ser-508. Residues Lys-569 and Lys-580 each participate in a glycyl lysine isopeptide (Lys-Gly) (interchain with G-Cter in SUMO2) cross-link. Residues 576 to 645 (VKVEKQEADD…ANSDGLQDSS (70 aa)) are disordered. 2 stretches are compositionally biased toward basic and acidic residues: residues 577–599 (KVEK…ERNR) and 615–636 (EDER…HEIA). Glycyl lysine isopeptide (Lys-Gly) (interchain with G-Cter in ubiquitin) cross-links involve residues Lys-684, Lys-688, and Lys-733. Positions 731–742 (QAKEESLADDLF) are enriched in basic and acidic residues. Positions 731–751 (QAKEESLADDLFRYNPNVKRR) are disordered. The FxF/Y motif motif lies at 738-747 (ADDLFRYNPN).

This sequence belongs to the Nibrin family. In terms of assembly, component of the MRN complex composed of two heterodimers RAD50 and MRE11 associated with a single NBN. The MRN complexes dimerize on DNA to form joined MRN-MRN oligomers required for DNA double-strand break repair. As part of the MRN complex, interacts with MCM9; the interaction recruits the complex to DNA repair sites. Component of the BASC complex, at least composed of BRCA1, MSH2, MSH6, MLH1, ATM, BLM, RAD50, MRE11 and NBN. Interacts with histone H2AX; this requires phosphorylation of H2AX on 'Ser-139' and promotes NBN recruitment to DNA damage sites. Interacts with (phosphorylated) MDC1; promoting NBN recruitment to DNA damage sites. Interacts with (phosphorylated) RAD17; promoting NBN recruitment to DNA damage sites. Interacts (via FxF/Y motif) with ATM. Interacts with HJURP. Interacts with INTS3. Interacts with KPNA2. Interacts with TERF2; interaction is disrupted upon NBN phosphorylation by CDK2. Interacts with (phosphorylated) RBBP8/CtIP; the interaction links the role of the MRN complex in DNA double-strand break sensing to resection. Interacts with SP100; recruits NBN to PML bodies. Interacts with ATF2. Interacts with MTOR, MAPKAP1 isoform 2 and RICTOR; indicative for an association with the mTORC2 complex. Interacts with MRNIP. Interacts with UFL1; promoting UFL1 recruitment to double-strand breaks following DNA damage. Interacts with CYREN (via XLF motif). Post-translationally, ubiquitinated at Lys-436 via 'Lys-6'-linked ubiquitin chains by RNF8, promoting NBN recruitment to DNA double-strand breaks (DSBs). Ubiquitinated at Lys-684 and Lys-688 via 'Lys-63'-linked ubiquitin chains by PELI1: ubiquitination takes place following PELI1 phosphorylation and promotes ATM activation and DNA repair. Ubiquitinated at Lys-733 via 'Lys-63'-linked ubiquitin chains by the SCF(SKP2) complex: ubiquitination takes place following SKP2 phosphorylation and promotes ATM activation and DNA repair. Phosphorylated by ATM in response of ionizing radiation, and such phosphorylation is responsible intra-S phase checkpoint control and telomere maintenance. Phosphorylated at Ser-433 by CDK2 in S/G2 phases abolishes interaction with TERF2, enabling DCLRE1B/Apollo recruitment to telomeres. Phosphorylation at Ser-433 in response to dysfunctional telomeres promotes non-homologous end joining repair at telomeres, while dephosphorylation by PPP1CA promotes microhomology-mediated end-joining (MMEJ) repair. In terms of tissue distribution, high expression in the liver, heart and testis. Low expression in all other tissues analyzed. In the cerebellum the postmitotic Purkinje cells are marked specifically.

Its subcellular location is the nucleus. The protein resides in the chromosome. The protein localises to the PML body. It is found in the telomere. In terms of biological role, component of the MRN complex, which plays a central role in double-strand break (DSB) repair, DNA recombination, maintenance of telomere integrity and meiosis. The MRN complex is involved in the repair of DNA double-strand breaks (DSBs) via homologous recombination (HR), an error-free mechanism which primarily occurs during S and G2 phases. The complex (1) mediates the end resection of damaged DNA, which generates proper single-stranded DNA, a key initial steps in HR, and is (2) required for the recruitment of other repair factors and efficient activation of ATM and ATR upon DNA damage. The MRN complex possesses single-strand endonuclease activity and double-strand-specific 3'-5' exonuclease activity, which are provided by MRE11, to initiate end resection, which is required for single-strand invasion and recombination. Within the MRN complex, NBN acts as a protein-protein adapter, which specifically recognizes and binds phosphorylated proteins, promoting their recruitment to DNA damage sites. Recruits MRE11 and RAD50 components of the MRN complex to DSBs in response to DNA damage. Promotes the recruitment of PI3/PI4-kinase family members ATM, ATR, and probably DNA-PKcs to the DNA damage sites, activating their functions. Mediates the recruitment of phosphorylated RBBP8/CtIP to DSBs, leading to cooperation between the MRN complex and RBBP8/CtIP to initiate end resection. RBBP8/CtIP specifically promotes the endonuclease activity of the MRN complex to clear DNA ends containing protein adducts. The MRN complex is also required for the processing of R-loops. NBN also functions in telomere length maintenance via its interaction with TERF2: interaction with TERF2 during G1 phase preventing recruitment of DCLRE1B/Apollo to telomeres. NBN also promotes DNA repair choice at dysfunctional telomeres: NBN phosphorylation by CDK2 promotes non-homologous end joining repair at telomeres, while unphosphorylated NBN promotes microhomology-mediated end-joining (MMEJ) repair. Enhances AKT1 phosphorylation possibly by association with the mTORC2 complex. This chain is Nibrin, found in Mus musculus (Mouse).